The chain runs to 203 residues: Small ribosomal subunit protein uS7B (203 aa).

It belongs to the universal ribosomal protein uS7 family. As to quaternary structure, component of the small ribosomal subunit (SSU). Mature yeast ribosomes consist of a small (40S) and a large (60S) subunit. The 40S small subunit contains 1 molecule of ribosomal RNA (18S rRNA) and at least 33 different proteins. The large 60S subunit contains 3 rRNA molecules (25S, 5.8S and 5S rRNA) and at least 46 different proteins.

The protein localises to the cytoplasm. Its function is as follows. Component of the ribosome, a large ribonucleoprotein complex responsible for the synthesis of proteins in the cell. The small ribosomal subunit (SSU) binds messenger RNAs (mRNAs) and translates the encoded message by selecting cognate aminoacyl-transfer RNA (tRNA) molecules. The large subunit (LSU) contains the ribosomal catalytic site termed the peptidyl transferase center (PTC), which catalyzes the formation of peptide bonds, thereby polymerizing the amino acids delivered by tRNAs into a polypeptide chain. The nascent polypeptides leave the ribosome through a tunnel in the LSU and interact with protein factors that function in enzymatic processing, targeting, and the membrane insertion of nascent chains at the exit of the ribosomal tunnel. The chain is Small ribosomal subunit protein uS7B (rps502) from Schizosaccharomyces pombe (strain 972 / ATCC 24843) (Fission yeast).